The primary structure comprises 381 residues: E3 ubiquitin-protein ligase RNF13 (381 aa).

Positions 1–34 are cleaved as a signal peptide; that stretch reads MLLSIGMLMLSATQIYTIVTVQLFAFLNLLPVEA. At 35–182 the chain is on the lumenal side; the sequence is DILAYNFENG…IPEFSLPLEY (148 aa). Residues 64–160 enclose the PA domain; that stretch reads LKGFLINSKP…GEASANSLKE (97 aa). N-linked (GlcNAc...) asparagine glycosylation is present at Asn-88. Residues 183 to 203 traverse the membrane as a helical segment; the sequence is YLIPFLIIVGICLILIVIFMI. Residues 204–381 lie on the Cytoplasmic side of the membrane; the sequence is TKFVQDRHRA…ERDYRVTNTV (178 aa). The segment at 240–282 adopts an RING-type; atypical zinc-finger fold; it reads CAICLDEYEDGDKLRILPCSHAYHCKCVDPWLTKTKKTCPVCK. The tract at residues 285-381 is disordered; that stretch reads VVPSQGDSDS…ERDYRVTNTV (97 aa). Acidic residues-rich tracts occupy residues 292-305 and 339-353; these read SDSE…ENEV and SEYE…DSSD. Over residues 370–381 the composition is skewed to basic and acidic residues; the sequence is NDERDYRVTNTV.

In terms of tissue distribution, widely expressed (at protein level). Lowest levels in the liver, moderate levels in the heart, intestine and spleen, and high levels in skeletal muscle, kidney, proventriculus and brain. Also expressed in inner ear after noise exposure.

The protein localises to the endoplasmic reticulum membrane. It is found in the late endosome membrane. The protein resides in the lysosome membrane. Its subcellular location is the nucleus inner membrane. The enzyme catalyses S-ubiquitinyl-[E2 ubiquitin-conjugating enzyme]-L-cysteine + [acceptor protein]-L-lysine = [E2 ubiquitin-conjugating enzyme]-L-cysteine + N(6)-ubiquitinyl-[acceptor protein]-L-lysine.. It participates in protein modification; protein ubiquitination. Functionally, E3 ubiquitin-protein ligase that regulates cell proliferation. Involved in apoptosis regulation. Mediates ER stress-induced activation of JNK signaling pathway and apoptosis by promoting ERN1 activation and splicing of XBP1 mRNA. The sequence is that of E3 ubiquitin-protein ligase RNF13 from Gallus gallus (Chicken).